A 25-amino-acid chain; its full sequence is Small ribosomal subunit protein uS19 (25 aa).

The disordered stretch occupies residues 1–25; it reads GHKLGEFAPTRTFRGHKKEDKKVKR.

It belongs to the universal ribosomal protein uS19 family.

In terms of biological role, protein S19 forms a complex with S13 that binds strongly to the 16S ribosomal RNA. The sequence is that of Small ribosomal subunit protein uS19 (rpsS) from Acholeplasma laidlawii.